Reading from the N-terminus, the 403-residue chain is Phosphoglycerate kinase (403 aa).

Substrate is bound by residues 24–26 (DLN), R39, 62–65 (HLGR), R121, and R161. Residues K211, G299, E330, and 359–362 (GGDS) contribute to the ATP site.

The protein belongs to the phosphoglycerate kinase family. In terms of assembly, monomer.

Its subcellular location is the cytoplasm. It carries out the reaction (2R)-3-phosphoglycerate + ATP = (2R)-3-phospho-glyceroyl phosphate + ADP. The protein operates within carbohydrate degradation; glycolysis; pyruvate from D-glyceraldehyde 3-phosphate: step 2/5. In Corynebacterium jeikeium (strain K411), this protein is Phosphoglycerate kinase.